The sequence spans 2201 residues: Voltage-dependent T-type calcium channel subunit alpha-1I (2201 aa).

The segment at 1–45 is disordered; sequence MADSNLPPSSAAAPAPEPGITEQPGPRSPPPSPPGLEEPLEGTNP. At 1-76 the chain is on the cytoplasmic side; sequence MADSNLPPSS…RNWCIKMVCN (76 aa). Residues 26-36 show a composition bias toward pro residues; sequence PRSPPPSPPGL. An I repeat occupies 64–399; that stretch reads TSPRNWCIKM…LCLVVIATQF (336 aa). A helical membrane pass occupies residues 77 to 97; the sequence is PWFECVSMLVILLNCVTLGMY. The Extracellular portion of the chain corresponds to 98–115; the sequence is QPCDDMECLSDRCKILQV. A helical transmembrane segment spans residues 116–137; the sequence is FDDFIFIFFAMEMVLKMVALGI. Residues 138 to 146 are Cytoplasmic-facing; the sequence is FGKKCYLGD. A helical transmembrane segment spans residues 147-166; sequence TWNRLDFFIVMAGMVEYSLD. The Extracellular segment spans residues 167–171; it reads LQNIN. An N-linked (GlcNAc...) asparagine glycan is attached at asparagine 171. Residues 172–189 form a helical membrane-spanning segment; the sequence is LSAIRTVRVLRPLKAINR. Residues 190-209 are Cytoplasmic-facing; sequence VPSMRILVNLLLDTLPMLGN. Residues 210–230 traverse the membrane as a helical segment; that stretch reads VLLLCFFVFFIFGIIGVQLWA. At 231–371 the chain is on the extracellular side; that stretch reads GLLRNRCFLE…YYVMDAHSFY (141 aa). N-linked (GlcNAc...) asparagine glycosylation is found at asparagine 242 and asparagine 309. Residues 372 to 396 form a helical membrane-spanning segment; sequence NFIYFILLIIVGSFFMINLCLVVIA. The Cytoplasmic portion of the chain corresponds to 397–598; it reads TQFSETKQRE…EKLRGIVDSK (202 aa). Disordered stretches follow at residues 463–500 and 513–579; these read QAMG…TPHT and PSSC…AARL. The span at 545-554 shows a compositional bias: low complexity; that stretch reads SAEAEANGDG. The stretch at 584 to 823 is one II repeat; sequence WRETREKLRG…LLVAILVEGF (240 aa). The chain crosses the membrane as a helical span at residues 599 to 619; the sequence is YFNRGIMMAILVNTVSMGIEH. The Extracellular portion of the chain corresponds to 620–632; the sequence is HEQPEELTNILEI. The helical transmembrane segment at 633-654 threads the bilayer; it reads CNVVFTSMFALEMILKLAAFGL. At 655–660 the chain is on the cytoplasmic side; that stretch reads FDYLRN. Residues 661–679 traverse the membrane as a helical segment; the sequence is PYNIFDSIIVIISIWEIVG. The Extracellular portion of the chain corresponds to 680 to 687; the sequence is QADGGLSV. Residues 688-711 form a helical membrane-spanning segment; the sequence is LRTFRLLRVLKLVRFMPALRRQLV. Over 712–722 the chain is Cytoplasmic; sequence VLMKTMDNVAT. The chain crosses the membrane as a helical span at residues 723–743; sequence FCMLLMLFIFIFSILGMHIFG. Residues 744 to 795 are Extracellular-facing; the sequence is CKFSLRTDTGDTVPDRKNFDSLLWAIVTVFQILTQEDWNVVLYNGMASTTPW. Residues 796–820 form a helical membrane-spanning segment; that stretch reads ASLYFVALMTFGNYVLFNLLVAILV. The Cytoplasmic segment spans residues 821–1125; sequence EGFQAEGDAN…NKFRILCQTI (305 aa). The tract at residues 936-969 is disordered; it reads WGRSGTWASRRSSWNSLKHKPPSAEHESLLSGEG. The segment covering 941 to 951 has biased composition (polar residues); it reads TWASRRSSWNS. Serine 1017 bears the Phosphoserine mark. One copy of the III repeat lies at 1116–1393; that stretch reads NKFRILCQTI…MFVGVVVENF (278 aa). Residues 1126-1148 traverse the membrane as a helical segment; it reads IAHKLFDYVVLAFIFLNCITIAL. Over 1149 to 1166 the chain is Extracellular; sequence ERPQIEAGSTERIFLTVS. A helical transmembrane segment spans residues 1167-1187; that stretch reads NYIFTAIFVGEMTLKVVSLGL. Residues 1188–1197 are Cytoplasmic-facing; it reads YFGEQAYLRS. A helical transmembrane segment spans residues 1198-1217; it reads SWNVLDGFLVFVSIIDIVVS. Topologically, residues 1218–1231 are extracellular; it reads VASAGGAKILGVLR. A helical transmembrane segment spans residues 1232–1253; it reads VLRLLRTLRPLRVISRAPGLKL. Residues 1254-1263 are Cytoplasmic-facing; the sequence is VVETLISSLK. Residues 1264–1287 form a helical membrane-spanning segment; that stretch reads PIGNIVLICCAFFIIFGILGVQLF. Residues 1288–1364 are Extracellular-facing; that stretch reads KGKFYHCLGV…DQQPVTNHNP (77 aa). Residues asparagine 1301 and asparagine 1304 are each glycosylated (N-linked (GlcNAc...) asparagine). The helical transmembrane segment at 1365-1390 threads the bilayer; that stretch reads WMLLYFISFLLIVSFFVLNMFVGVVV. The Cytoplasmic portion of the chain corresponds to 1391–1445; it reads ENFHKCRQHQEAEEARRREEKRLRRLEKKRRKAQRLPYYATYCPTRLLIHSMCTS. The IV repeat unit spans residues 1431–1692; the sequence is TYCPTRLLIH…VVVAVLMKHL (262 aa). The chain crosses the membrane as a helical span at residues 1446–1466; it reads HYLDIFITFIICLNVVTMSLE. At 1467 to 1480 the chain is on the extracellular side; sequence HYNQPTSLETALKY. A helical transmembrane segment spans residues 1481 to 1502; that stretch reads CNYMFTTVFVLEAVLKLVAFGL. Over 1503-1509 the chain is Cytoplasmic; the sequence is RRFFKDR. The chain crosses the membrane as a helical span at residues 1510–1528; that stretch reads WNQLDLAIVLLSVMGITLE. The Extracellular portion of the chain corresponds to 1529 to 1542; it reads EIEINAALPINPTI. The chain crosses the membrane as a helical span at residues 1543–1566; the sequence is IRIMRVLRIARVLKLLKMATGMRA. The Cytoplasmic segment spans residues 1567 to 1580; that stretch reads LLDTVVQALPQVGN. The helical transmembrane segment at 1581-1601 threads the bilayer; sequence LGLLFMLLFFIYAALGVELFG. Residues 1602 to 1664 are Extracellular-facing; that stretch reads KLVCNDENPC…RSCLSSLQFV (63 aa). A helical membrane pass occupies residues 1665-1692; it reads SPLYFVSFVLTAQFVLINVVVAVLMKHL. At 1693–1835 the chain is on the cytoplasmic side; the sequence is DDSNKEAQED…EVQLAETEAF (143 aa). Disordered stretches follow at residues 1846–1876, 1916–1938, 1992–2045, 2057–2105, and 2126–2201; these read LLGD…PEPM, LKHD…PLLQ, SDTS…TRRR, RGLR…HSET, and LTPA…KRKR. The segment covering 1992–2007 has biased composition (low complexity); that stretch reads SDTSLDASPSSSAGSL. Polar residues-rich tracts occupy residues 2008–2019 and 2066–2075; these read QTTLEDSLTLSD and HSSGGSTSPG. Positions 2077 to 2090 are enriched in basic and acidic residues; the sequence is THHDSMDPSDEEGR.

The protein belongs to the calcium channel alpha-1 subunit (TC 1.A.1.11) family. CACNA1I subfamily. Interacts with CATSPER1 and CATSPER2, leading to suppress T-type calcium channel activity. In terms of processing, in response to raising of intracellular calcium, the T-type channels are activated by CaM-kinase II. Brain.

It localises to the membrane. It catalyses the reaction Ca(2+)(in) = Ca(2+)(out). In terms of biological role, voltage-sensitive calcium channels (VSCC) mediate the entry of calcium ions into excitable cells and are also involved in a variety of calcium-dependent processes, including muscle contraction, hormone or neurotransmitter release, gene expression, cell motility, cell division and cell death. This channel gives rise to T-type calcium currents. T-type calcium channels belong to the 'low-voltage activated (LVA)' group and are strongly blocked by nickel and mibefradil. A particularity of this type of channels is an opening at quite negative potentials, and a voltage-dependent inactivation. T-type channels serve pacemaking functions in both central neurons and cardiac nodal cells and support calcium signaling in secretory cells and vascular smooth muscle. They may also be involved in the modulation of firing patterns of neurons which is important for information processing as well as in cell growth processes. Gates in voltage ranges similar to, but higher than alpha 1G or alpha 1H. Voltage-sensitive calcium channels (VSCC) mediate the entry of calcium ions into excitable cells and are also involved in a variety of calcium-dependent processes, including muscle contraction, hormone or neurotransmitter release, gene expression, cell motility, cell division and cell death. This channel gives rise to T-type calcium currents. The chain is Voltage-dependent T-type calcium channel subunit alpha-1I (Cacna1i) from Rattus norvegicus (Rat).